Consider the following 200-residue polypeptide: Probable GTP-binding protein EngB (200 aa).

In terms of domain architecture, EngB-type G spans 24-199 (EGAEVAFAGR…RGVIGGWLGL (176 aa)). Residues 32–39 (GRSNAGKS), 59–63 (GRTQQ), 77–80 (DLPG), 144–147 (TKAD), and 178–180 (FSG) each bind GTP. Mg(2+)-binding residues include Ser-39 and Thr-61.

The protein belongs to the TRAFAC class TrmE-Era-EngA-EngB-Septin-like GTPase superfamily. EngB GTPase family. Mg(2+) is required as a cofactor.

Necessary for normal cell division and for the maintenance of normal septation. In Stenotrophomonas maltophilia (strain K279a), this protein is Probable GTP-binding protein EngB.